Reading from the N-terminus, the 440-residue chain is Lysine histidine transporter-like 6 (440 aa).

Over residues 1 to 10 (MVSSSPVSPS) the composition is skewed to polar residues. The disordered stretch occupies residues 1 to 25 (MVSSSPVSPSKETDRKSGEKWTAED). Residues 1–31 (MVSSSPVSPSKETDRKSGEKWTAEDPSRPAK) lie on the Cytoplasmic side of the membrane. The segment covering 11-25 (KETDRKSGEKWTAED) has biased composition (basic and acidic residues). Residues 32 to 51 (WWYSTFHTVTAMIGAGVLSL) traverse the membrane as a helical segment. At 52 to 61 (PYAMAYLGWG) the chain is on the extracellular side. Residues 62–82 (PGTFVLAMTWGLTLNTMWQMV) form a helical membrane-spanning segment. Residues 83-109 (QLHECVPGTRFDRYIDLGRYAFGPKLG) lie on the Cytoplasmic side of the membrane. A helical membrane pass occupies residues 110-130 (PWIVLPQQLIVQVGCNIVYMV). Residues 131-152 (TGGKCLKQFVEITCSTCTPVRQ) lie on the Extracellular side of the membrane. The chain crosses the membrane as a helical span at residues 153 to 173 (SYWILGFGGVHFILSQLPNFN). Position 174 (Ser174) is a topological domain, cytoplasmic. Residues 175 to 195 (VAGVSLAAAVMSLCYSTIAWG) traverse the membrane as a helical segment. Residues 196–221 (GSIAHGRVPDVSYDYKATNPGDFTFR) lie on the Extracellular side of the membrane. A helical transmembrane segment spans residues 222–242 (VFNALGQISFAFAGHAVALEI). At 243–261 (QATMPSTPERPSKVPMWQG) the chain is on the cytoplasmic side. Residues 262–282 (VIGAYVVNAVCYFPVALICYW) traverse the membrane as a helical segment. Residues 283–300 (AFGQDVDDNVLMNLQRPA) lie on the Extracellular side of the membrane. Residues 301–321 (WLIAAANLMVVVHVIGSYQVF) traverse the membrane as a helical segment. The Cytoplasmic portion of the chain corresponds to 322–353 (AMPVFDLLERMMVNKFGFKHGVVLRFFTRTIY). Transmembrane regions (helical) follow at residues 354–374 (VAFT…LGFF) and 375–395 (GGFG…LIIK). The Cytoplasmic segment spans residues 396 to 399 (KPRR). A helical membrane pass occupies residues 400–420 (FSVTWFVNWISIIVGVFIMLA). The Extracellular segment spans residues 421–440 (STIGGLRNIIADSSTYSFYA).

This sequence belongs to the amino acid/polyamine transporter 2 family. Amino acid/auxin permease (AAAP) (TC 2.A.18.2) subfamily.

Its subcellular location is the cell membrane. Its function is as follows. Amino acid transporter. This Arabidopsis thaliana (Mouse-ear cress) protein is Lysine histidine transporter-like 6.